The chain runs to 200 residues: 3-isopropylmalate dehydratase small subunit (200 aa).

This sequence belongs to the LeuD family. LeuD type 1 subfamily. Heterodimer of LeuC and LeuD.

It catalyses the reaction (2R,3S)-3-isopropylmalate = (2S)-2-isopropylmalate. It participates in amino-acid biosynthesis; L-leucine biosynthesis; L-leucine from 3-methyl-2-oxobutanoate: step 2/4. Catalyzes the isomerization between 2-isopropylmalate and 3-isopropylmalate, via the formation of 2-isopropylmaleate. This chain is 3-isopropylmalate dehydratase small subunit, found in Vibrio cholerae serotype O1 (strain ATCC 39541 / Classical Ogawa 395 / O395).